A 444-amino-acid polypeptide reads, in one-letter code: Trigger factor (444 aa).

The PPIase FKBP-type domain occupies 185 to 270; that stretch reads GDKLIIDFEG…VNEIQIAKDF (86 aa).

This sequence belongs to the FKBP-type PPIase family. Tig subfamily.

The protein localises to the cytoplasm. It carries out the reaction [protein]-peptidylproline (omega=180) = [protein]-peptidylproline (omega=0). Its function is as follows. Involved in protein export. Acts as a chaperone by maintaining the newly synthesized protein in an open conformation. Functions as a peptidyl-prolyl cis-trans isomerase. This is Trigger factor from Wolbachia pipientis wMel.